The primary structure comprises 901 residues: HTH-type transcriptional regulator MalT (901 aa).

Residue 39–46 (SPAGYGKT) participates in ATP binding. Residues 829-894 (ELIRTSPLTQ…AAVQHAQKLL (66 aa)) form the HTH luxR-type domain. Residues 853-872 (NEQIAGELEVAATTIKTHIR) constitute a DNA-binding region (H-T-H motif).

This sequence belongs to the MalT family. As to quaternary structure, monomer in solution. Oligomerizes to an active state in the presence of the positive effectors ATP and maltotriose.

With respect to regulation, activated by ATP and maltotriose, which are both required for DNA binding. In terms of biological role, positively regulates the transcription of the maltose regulon whose gene products are responsible for uptake and catabolism of malto-oligosaccharides. Specifically binds to the promoter region of its target genes, recognizing a short DNA motif called the MalT box. In Escherichia coli O45:K1 (strain S88 / ExPEC), this protein is HTH-type transcriptional regulator MalT.